Here is a 293-residue protein sequence, read N- to C-terminus: Small ribosomal subunit protein uS2m (293 aa).

Over residues 21–38 (GRAAQRGRTLGSAAAAAA) the composition is skewed to low complexity. 2 disordered regions span residues 21–49 (GRAA…DRSA) and 263–293 (QGAP…GHSP). Over residues 39–49 (REPERDSDRSA) the composition is skewed to basic and acidic residues. Residues 267 to 279 (GPHPANPAAPGAP) show a composition bias toward pro residues.

The protein belongs to the universal ribosomal protein uS2 family. As to quaternary structure, component of the mitochondrial ribosome small subunit (28S) which comprises a 12S rRNA and about 30 distinct proteins.

Its subcellular location is the mitochondrion. In terms of biological role, required for mitoribosome formation and stability, and mitochondrial translation. This Bos taurus (Bovine) protein is Small ribosomal subunit protein uS2m (MRPS2).